A 118-amino-acid polypeptide reads, in one-letter code: Probable dihydroneopterin aldolase (118 aa).

Substrate contacts are provided by residues Glu21, Tyr53, and 72 to 73 (IE). Residue Lys98 is the Proton donor/acceptor of the active site.

Belongs to the DHNA family.

It carries out the reaction 7,8-dihydroneopterin = 6-hydroxymethyl-7,8-dihydropterin + glycolaldehyde. Its pathway is cofactor biosynthesis; tetrahydrofolate biosynthesis; 2-amino-4-hydroxy-6-hydroxymethyl-7,8-dihydropteridine diphosphate from 7,8-dihydroneopterin triphosphate: step 3/4. Its function is as follows. Catalyzes the conversion of 7,8-dihydroneopterin to 6-hydroxymethyl-7,8-dihydropterin. This chain is Probable dihydroneopterin aldolase (folB), found in Synechocystis sp. (strain ATCC 27184 / PCC 6803 / Kazusa).